The sequence spans 136 residues: MARVTVEDCIEKVENRFELVLLASHRARLLAAGAPLTVERDRDKNPVVALREIGDETITAEDLKEQLIHSMQKYVEVDEPEAETVPLLSSSPAAAAVAPQSSSDDKNVQFDFMSEEDLLRGLENLAPPTETDDEGE.

This sequence belongs to the RNA polymerase subunit omega family. As to quaternary structure, the RNAP catalytic core consists of 2 alpha, 1 beta, 1 beta' and 1 omega subunit. When a sigma factor is associated with the core the holoenzyme is formed, which can initiate transcription.

The catalysed reaction is RNA(n) + a ribonucleoside 5'-triphosphate = RNA(n+1) + diphosphate. In terms of biological role, promotes RNA polymerase assembly. Latches the N- and C-terminal regions of the beta' subunit thereby facilitating its interaction with the beta and alpha subunits. The polypeptide is DNA-directed RNA polymerase subunit omega (Methylorubrum extorquens (strain CM4 / NCIMB 13688) (Methylobacterium extorquens)).